A 252-amino-acid polypeptide reads, in one-letter code: Probable ABC transporter ATP-binding protein p29 (252 aa).

In terms of domain architecture, ABC transporter spans 8 to 252 (LEIKNLTFKN…NILDQVFKND (245 aa)). 42–49 (GSSGQGKS) lines the ATP pocket.

It belongs to the ABC transporter superfamily.

Functionally, part of a high-affinity transport system. This is Probable ABC transporter ATP-binding protein p29 from Mesomycoplasma hyorhinis (Mycoplasma hyorhinis).